A 170-amino-acid chain; its full sequence is Methanogen homoaconitase small subunit (170 aa).

The short motif at 26–29 (YLRT) is the YLRT element.

The protein belongs to the LeuD family. LeuD type 2 subfamily. As to quaternary structure, heterotetramer of 2 HacA and 2 HacB proteins.

It carries out the reaction (2R)-homocitrate = (2R,3S)-homoisocitrate. The enzyme catalyses (2R)-homocitrate = cis-homoaconitate + H2O. It catalyses the reaction (2R,3S)-homoisocitrate = cis-homoaconitate + H2O. The catalysed reaction is cis-(homo)2aconitate + H2O = (2R,3S)-iso(homo)2citrate. It carries out the reaction cis-(homo)3aconitate + H2O = (2R,3S)-iso(homo)3citrate. It participates in organic acid metabolism; 2-oxosuberate biosynthesis. Its function is as follows. Component of a hydro-lyase with broad substrate specificity for cis-unsaturated tricarboxylic acids. Catalyzes both the reversible dehydration of (R)-homocitrate ((R)-2-hydroxybutane-1,2,4-tricarboxylate) to produce cis-homoaconitate ((Z)-but-1-ene-1,2,4-tricarboxylate), and its hydration to homoisocitrate ((1R,2S)-1-hydroxybutane-1,2,4-tricarboxylate). Is also able to hydrate the analogous longer chain substrates cis-homo(2)-aconitate, cis-homo(3)-aconitate. These reactions are part of the biosynthesis pathway of coenzyme B. The chain is Methanogen homoaconitase small subunit (hacB) from Methanothermobacter thermautotrophicus (strain ATCC 29096 / DSM 1053 / JCM 10044 / NBRC 100330 / Delta H) (Methanobacterium thermoautotrophicum).